A 548-amino-acid chain; its full sequence is mRNA cleavage and polyadenylation factor CLP1 (548 aa).

ATP is bound by residues E19, K60, and S123–T128. Residues E437–E481 are compositionally biased toward basic and acidic residues. The disordered stretch occupies residues E437–E500. Residues E482–E494 show a composition bias toward acidic residues.

It belongs to the Clp1 family. Clp1 subfamily. In terms of assembly, component of a pre-mRNA cleavage factor complex. Interacts directly with PCF11.

Its subcellular location is the nucleus. Its function is as follows. Required for endonucleolytic cleavage during polyadenylation-dependent pre-mRNA 3'-end formation. This is mRNA cleavage and polyadenylation factor CLP1 from Cryptococcus neoformans var. neoformans serotype D (strain B-3501A) (Filobasidiella neoformans).